The primary structure comprises 237 residues: 7-cyano-7-deazaguanine synthase (237 aa).

15–25 contacts ATP; the sequence is LSGGMDSTVCA. 4 residues coordinate Zn(2+): Cys-197, Cys-205, Cys-208, and Cys-211.

It belongs to the QueC family. Requires Zn(2+) as cofactor.

The enzyme catalyses 7-carboxy-7-deazaguanine + NH4(+) + ATP = 7-cyano-7-deazaguanine + ADP + phosphate + H2O + H(+). It participates in purine metabolism; 7-cyano-7-deazaguanine biosynthesis. Its function is as follows. Catalyzes the ATP-dependent conversion of 7-carboxy-7-deazaguanine (CDG) to 7-cyano-7-deazaguanine (preQ(0)). The chain is 7-cyano-7-deazaguanine synthase from Koribacter versatilis (strain Ellin345).